The primary structure comprises 641 residues: Sodium-dependent nutrient amino acid transporter 1 (641 aa).

The interval 1–36 (MELKGVQPSNGSANGNGTTNAASTEKTDAEKHTPER) is disordered. Topologically, residues 1–38 (MELKGVQPSNGSANGNGTTNAASTEKTDAEKHTPERTN) are cytoplasmic. A compositionally biased stretch (low complexity) spans 9 to 24 (SNGSANGNGTTNAAST). A compositionally biased stretch (basic and acidic residues) spans 25 to 35 (EKTDAEKHTPE). 3 consecutive transmembrane segments (helical) span residues 39-59 (WGNG…LGNV), 72-92 (GAFL…MYYL), and 109-129 (SVVP…ICII). N-linked (GlcNAc...) asparagine glycosylation is found at Asn-183 and Asn-188. A run of 9 helical transmembrane segments spans residues 229-249 (PDWK…LVIM), 258-278 (AAYF…IRAV), 307-327 (AVVQ…MFAS), 341-361 (IVTT…FAIL), 401-421 (LFSV…IVAL), 441-461 (VALI…TPGG), 474-494 (TYVV…VYGL), 516-536 (CWSF…MVTI), and 552-572 (IAGW…GLWY).

This sequence belongs to the sodium:neurotransmitter symporter (SNF) (TC 2.A.22) family.

Its subcellular location is the membrane. Unusual broad substrate spectrum amino acid:sodium cotransporter that promotes absorption of the D isomers of essential amino acids. Neutral amino acids are the preferred substrates, especially methionine and phenylalanine. The sequence is that of Sodium-dependent nutrient amino acid transporter 1 from Drosophila erecta (Fruit fly).